Consider the following 23-residue polypeptide: Cytochrome c3-1 (23 aa).

The tract at residues 1–23 is disordered; it reads AAPKAPADGLKMDKTKQXVVFNH. Histidine 23 lines the heme pocket.

Binds 4 heme groups per subunit.

It is found in the periplasm. Its function is as follows. Participates in sulfate respiration coupled with phosphorylation by transferring electrons from the enzyme dehydrogenase to ferredoxin. This is Cytochrome c3-1 from Nitratidesulfovibrio vulgaris (Desulfovibrio vulgaris).